The primary structure comprises 326 residues: Vitamin B12 import system permease protein BtuC (326 aa).

9 helical membrane passes run 17-39, 59-81, 88-107, 111-133, 146-168, 188-205, 242-264, 274-296, and 303-322; these read LSLSLLVLLATLLSLCAGEQWIA, RTLAVLLVGAALALSGAVMQALF, PGLLGVSNGAGVGLIAAVLL, QLPGWALGLCAIAGALIITLILL, LLAGVALGIICSALMTWAIYFST, WQQSWLMIALIPVLIWIC, MVGVSVAMAGAIGFIGLVIPHIL, VLLPGCALAGAIALLLADVVARL, and LPIGVVTATLGAPVFIWLLL.

The protein belongs to the binding-protein-dependent transport system permease family. FecCD subfamily. The complex is composed of two ATP-binding proteins (BtuD), two transmembrane proteins (BtuC) and a solute-binding protein (BtuF).

Its subcellular location is the cell inner membrane. Part of the ABC transporter complex BtuCDF involved in vitamin B12 import. Involved in the translocation of the substrate across the membrane. In Salmonella typhi, this protein is Vitamin B12 import system permease protein BtuC.